We begin with the raw amino-acid sequence, 78 residues long: MSRVCQVTGKKPMVGNNRSHAKNATRRRFLPNLQNHRFWLEEEKRFVQLRVSTKGIRLIDKKGIEVVVAELRARGEKV.

Residues 1 to 21 are disordered; it reads MSRVCQVTGKKPMVGNNRSHA.

The protein belongs to the bacterial ribosomal protein bL28 family.

This is Large ribosomal subunit protein bL28 from Shewanella baltica (strain OS223).